A 158-amino-acid polypeptide reads, in one-letter code: MRAPMTLKGVRRLRDELEHLKSVKRPEIINAIAEARAHGDLKENAEYHAAREQQSFIEGRIKQLEGELSHAEVIDVAKLNAGTKIVFGATVTLVDLETDEESRYQIVGDLEADIKQGLVAISSPVARALIGKQEGDTIVIEAPAGRREYEVVAVEYIS.

Positions 45 to 72 (AEYHAAREQQSFIEGRIKQLEGELSHAE) form a coiled coil.

The protein belongs to the GreA/GreB family.

Functionally, necessary for efficient RNA polymerase transcription elongation past template-encoded arresting sites. The arresting sites in DNA have the property of trapping a certain fraction of elongating RNA polymerases that pass through, resulting in locked ternary complexes. Cleavage of the nascent transcript by cleavage factors such as GreA or GreB allows the resumption of elongation from the new 3'terminus. GreA releases sequences of 2 to 3 nucleotides. This chain is Transcription elongation factor GreA, found in Xylella fastidiosa (strain 9a5c).